Consider the following 1121-residue polypeptide: Potassium channel subfamily U member 1 (1121 aa).

Residues 1 to 24 (MSQTLLDSLNQKELTETSCTIEIQ) lie on the Extracellular side of the membrane. Residues 25–45 (AAFILSSLATFFGGLIILFLF) traverse the membrane as a helical segment. The Cytoplasmic segment spans residues 46 to 101 (RIALKSSRSWKYVKGPRGLLELFSSRRIEANPLRKLYFHGVFRQRIEMLLSAQTVV). Residues 102 to 122 (GQVLVILVFVLSIGSLVIYFI) traverse the membrane as a helical segment. Topologically, residues 123–137 (NSMDPVRRCSSYEDK) are extracellular. Residues 138-158 (IVHVDLSFNAFFSFYFGLRFW) traverse the membrane as a helical segment. At 159-165 (AAEDKIK) the chain is on the cytoplasmic side. A helical transmembrane segment spans residues 166-186 (FWLEMNSIVDIFTIPPTFISY). At 187–188 (YL) the chain is on the extracellular side. Residues 189 to 209 (KSNWLGLRFLRALRLLELPKI) traverse the membrane as a helical; Voltage-sensor segment. The Cytoplasmic segment spans residues 210 to 226 (LQILQVIKTSNSVKLSK). The chain crosses the membrane as a helical span at residues 227–247 (LLSIVISTWFTAAGFLHLVEN). The Extracellular portion of the chain corresponds to 248–259 (SGDPWLNGRNSQ). The segment at residues 260-282 (TMSYFESIYLVTATMSTVGFGDV) is an intramembrane region (pore-forming). The Selectivity for potassium signature appears at 276–279 (TVGF). The Extracellular segment spans residues 283 to 290 (VAKTSLGR). The helical transmembrane segment at 291 to 311 (IFIVFFTLGSLILFANYIPEM) threads the bilayer. Topologically, residues 312–1121 (VELFSTRKKY…LDASDIVQEK (810 aa)) are cytoplasmic. RCK N-terminal domains are found at residues 331–473 (KKFI…DNIL) and 718–889 (QNHI…DGML). 2 disordered regions span residues 836 to 858 (SPTP…KERK) and 1052 to 1076 (DSSP…GSNF).

This sequence belongs to the potassium channel family. Calcium-activated (TC 1.A.1.3) subfamily. KCa5.1/KCNU1 sub-subfamily. Homotetramer; which constitutes the calcium-activated potassium channel. Interact with LRRC52; this interaction changes some channel gating properties, such as shifting gating to more negative potentials at a given pH. Testis-specific. Mainly expressed in spermatocytes. As to expression, expressed in testis, brain, eye and kidney.

Its subcellular location is the cell membrane. It localises to the cytoplasm. The enzyme catalyses K(+)(in) = K(+)(out). Regulated by changes in cytosolic pH; activated by alkalization. In contrast to human KCNU1 is not activated by Ca(2+) or Mg(2+). The auxiliary subunit LRRC52 shifts the activation of KCNU1 to more negative potentials at a given pH. Testis-specific potassium channel activated by both intracellular pH and membrane voltage that mediates export of K(+). Represents the primary spermatozoan K(+) current. The channel underlies a pH-triggered membrane hyperpolarization during the process of sperm capacitation, as sperm encounter the alkaline environment near the ovum in the female reproductive tract, thereby playing an essential for male fertility. In Mus musculus (Mouse), this protein is Potassium channel subfamily U member 1 (Kcnu1).